The sequence spans 41 residues: MKVRNSLKSLLTRHRENRLVRRKGRLYVINKTQRRFKARQG.

Belongs to the bacterial ribosomal protein bL36 family.

This Rhodopseudomonas palustris (strain TIE-1) protein is Large ribosomal subunit protein bL36.